Here is a 489-residue protein sequence, read N- to C-terminus: CDK5RAP3 protein homolog (489 aa).

This sequence belongs to the CDK5RAP3 family.

Functionally, substrate adapter of E3 ligase complexes mediating ufmylation, the covalent attachment of the ubiquitin-like modifier UFM1 to substrate proteins, and which is involved in various processes, such as ribosome recycling and reticulophagy (also called ER-phagy). This Caenorhabditis elegans protein is CDK5RAP3 protein homolog.